A 277-amino-acid polypeptide reads, in one-letter code: MADDAVVEEGSVEVSALAAGRPSWSWQRPGERARTPGRKAEDKEWVPVTKLGRLVKDMKIKSLEEIYLYSLPIKESEIIDFFLGSALKDEVLKIMPVQKQTRAGQRTRFKAFVAIGDYNGHVGLGVKCSKEVATAIRGAIILAKLSIIPVRRGYWGNKIGKPHTVPCKVTGRCGSVLVRLIPAPRGTGIVSAPVPKKLLMMAGIDDCYTSARGCTATLGNFAKATFDAISKTYSYLTPDLWKETVFTKSPYQEFTDHLAKTHTRVSVQRTQAAVQPS.

Residues 18-40 (AAGRPSWSWQRPGERARTPGRKA) form a disordered region. The segment covering 29–40 (PGERARTPGRKA) has biased composition (basic and acidic residues). The S5 DRBM domain maps to 87–150 (LKDEVLKIMP…ILAKLSIIPV (64 aa)).

The protein belongs to the universal ribosomal protein uS5 family. In terms of assembly, component of the small ribosomal subunit.

It is found in the cytoplasm. The protein resides in the nucleus. It localises to the nucleolus. Its function is as follows. Component of the ribosome, a large ribonucleoprotein complex responsible for the synthesis of proteins in the cell. The small ribosomal subunit (SSU) binds messenger RNAs (mRNAs) and translates the encoded message by selecting cognate aminoacyl-transfer RNA (tRNA) molecules. The large subunit (LSU) contains the ribosomal catalytic site termed the peptidyl transferase center (PTC), which catalyzes the formation of peptide bonds, thereby polymerizing the amino acids delivered by tRNAs into a polypeptide chain. The nascent polypeptides leave the ribosome through a tunnel in the LSU and interact with protein factors that function in enzymatic processing, targeting, and the membrane insertion of nascent chains at the exit of the ribosomal tunnel. Plays a role in the assembly and function of the 40S ribosomal subunit. Mutations in this protein affects the control of translational fidelity. Involved in nucleolar processing of pre-18S ribosomal RNA and ribosome assembly. The sequence is that of Small ribosomal subunit protein uS5 (rps2) from Ictalurus punctatus (Channel catfish).